The following is a 198-amino-acid chain: Imidazoleglycerol-phosphate dehydratase (198 aa).

This sequence belongs to the imidazoleglycerol-phosphate dehydratase family.

The protein localises to the cytoplasm. The enzyme catalyses D-erythro-1-(imidazol-4-yl)glycerol 3-phosphate = 3-(imidazol-4-yl)-2-oxopropyl phosphate + H2O. It participates in amino-acid biosynthesis; L-histidine biosynthesis; L-histidine from 5-phospho-alpha-D-ribose 1-diphosphate: step 6/9. The sequence is that of Imidazoleglycerol-phosphate dehydratase from Herminiimonas arsenicoxydans.